The primary structure comprises 370 residues: tRNA-specific 2-thiouridylase MnmA (370 aa).

Residues 12-19 and methionine 38 contribute to the ATP site; that span reads GLSGGVDS. Positions 98 to 100 are interaction with target base in tRNA; the sequence is NPD. Cysteine 103 serves as the catalytic Nucleophile. Cysteine 103 and cysteine 201 are disulfide-bonded. ATP is bound at residue glycine 127. Positions 151–153 are interaction with tRNA; it reads KDQ. The Cysteine persulfide intermediate role is filled by cysteine 201. Positions 319–320 are interaction with tRNA; sequence RY.

This sequence belongs to the MnmA/TRMU family.

The protein localises to the cytoplasm. It carries out the reaction S-sulfanyl-L-cysteinyl-[protein] + uridine(34) in tRNA + AH2 + ATP = 2-thiouridine(34) in tRNA + L-cysteinyl-[protein] + A + AMP + diphosphate + H(+). In terms of biological role, catalyzes the 2-thiolation of uridine at the wobble position (U34) of tRNA, leading to the formation of s(2)U34. This is tRNA-specific 2-thiouridylase MnmA from Verminephrobacter eiseniae (strain EF01-2).